Here is a 137-residue protein sequence, read N- to C-terminus: Peptide methionine sulfoxide reductase MsrB (137 aa).

Positions 7 to 129 (AEELKKKLSE…NSASLAFSDE (123 aa)) constitute a MsrB domain. Zn(2+)-binding residues include Cys-46, Cys-49, Cys-95, and Cys-98. Cys-118 functions as the Nucleophile in the catalytic mechanism.

This sequence belongs to the MsrB Met sulfoxide reductase family. Requires Zn(2+) as cofactor.

The catalysed reaction is L-methionyl-[protein] + [thioredoxin]-disulfide + H2O = L-methionyl-(R)-S-oxide-[protein] + [thioredoxin]-dithiol. In Salmonella arizonae (strain ATCC BAA-731 / CDC346-86 / RSK2980), this protein is Peptide methionine sulfoxide reductase MsrB.